A 198-amino-acid polypeptide reads, in one-letter code: Peptidyl-tRNA hydrolase (198 aa).

Tyr-16 lines the tRNA pocket. His-21 serves as the catalytic Proton acceptor. TRNA-binding residues include Phe-67, Asn-69, and Asn-115.

The protein belongs to the PTH family. Monomer.

It localises to the cytoplasm. The enzyme catalyses an N-acyl-L-alpha-aminoacyl-tRNA + H2O = an N-acyl-L-amino acid + a tRNA + H(+). Its function is as follows. Hydrolyzes ribosome-free peptidyl-tRNAs (with 1 or more amino acids incorporated), which drop off the ribosome during protein synthesis, or as a result of ribosome stalling. Catalyzes the release of premature peptidyl moieties from peptidyl-tRNA molecules trapped in stalled 50S ribosomal subunits, and thus maintains levels of free tRNAs and 50S ribosomes. In Prochlorococcus marinus (strain MIT 9301), this protein is Peptidyl-tRNA hydrolase.